A 315-amino-acid chain; its full sequence is Probable cytochrome c oxidase subunit 2 (315 aa).

3 consecutive transmembrane segments (helical) span residues 54 to 74 (IALI…PLPW), 96 to 116 (LLYI…FVCI), and 133 to 153 (VLIE…IAVP). His235, Cys270, Cys274, and His278 together coordinate Cu cation.

The protein belongs to the cytochrome c oxidase subunit 2 family. The cofactor is Cu cation. It depends on heme as a cofactor.

It localises to the cell membrane. It catalyses the reaction 4 Fe(II)-[cytochrome c] + O2 + 8 H(+)(in) = 4 Fe(III)-[cytochrome c] + 2 H2O + 4 H(+)(out). Its function is as follows. Subunits I and II form the functional core of the enzyme complex. Electrons originating in cytochrome c are transferred via heme a and Cu(A) to the binuclear center formed by heme a3 and Cu(B). The chain is Probable cytochrome c oxidase subunit 2 (ctaC) from Rickettsia conorii (strain ATCC VR-613 / Malish 7).